Reading from the N-terminus, the 939-residue chain is AP-2 complex subunit alpha (939 aa).

The span at 623–633 (RVPENEIRESK) shows a compositional bias: basic and acidic residues. A disordered region spans residues 623–660 (RVPENEIRESKSPAPTSGPGSVLQNNVHVNNSHSKLNN). Over residues 635–660 (PAPTSGPGSVLQNNVHVNNSHSKLNN) the composition is skewed to polar residues.

Belongs to the adapter complexes large subunit family. As to quaternary structure, adaptor protein complex 2 (AP-2) is a heterotetramer composed of two large adaptins (alpha-type and beta-type subunits), a medium adaptin (mu-type subunit AP50) and a small adaptin (sigma-type subunit AP17).

It localises to the cell membrane. Its subcellular location is the membrane. The protein localises to the coated pit. In terms of biological role, adaptins are components of the adapter complexes which link clathrin to receptors in coated vesicles. Clathrin-associated protein complexes are believed to interact with the cytoplasmic tails of membrane proteins, leading to their selection and concentration. Alpha adaptin is a subunit of the plasma membrane adapter. In Drosophila pseudoobscura pseudoobscura (Fruit fly), this protein is AP-2 complex subunit alpha.